The sequence spans 86 residues: Anti-adapter protein IraP (86 aa).

Positions 1–42 (MKNLIAELLVKLAQKEEESKELVAQVEALEIVVTALLRQMAQ) form a coiled coil.

This sequence belongs to the IraP family. Interacts with RssB.

Its subcellular location is the cytoplasm. Its function is as follows. Inhibits RpoS proteolysis by regulating RssB activity, thereby increasing the stability of the sigma stress factor RpoS especially during phosphate starvation, but also in stationary phase and during nitrogen starvation. Its effect on RpoS stability is due to its interaction with RssB, which probably blocks the interaction of RssB with RpoS, and the consequent delivery of the RssB-RpoS complex to the ClpXP protein degradation pathway. This chain is Anti-adapter protein IraP, found in Enterobacter sp. (strain 638).